A 500-amino-acid polypeptide reads, in one-letter code: 4-aminobutyrate aminotransferase, mitochondrial (500 aa).

The N-terminal 28 residues, 1 to 28 (MASVLLTRRLACSFRHNHRLLVPGWRHI), are a transit peptide targeting the mitochondrion. Cys-163 provides a ligand contact to [2Fe-2S] cluster. A pyridoxal 5'-phosphate-binding site is contributed by 164–165 (GS). Position 166 (Cys-166) interacts with [2Fe-2S] cluster. Arg-220 is a substrate binding site. Lys-231 carries the N6-succinyllysine modification. Lys-252 is modified (N6-acetyllysine; alternate). Lys-252 carries the N6-succinyllysine; alternate modification. An N6-acetyllysine mark is found at Lys-279 and Lys-318. Lys-357 carries the post-translational modification N6-(pyridoxal phosphate)lysine. Thr-381 lines the pyridoxal 5'-phosphate pocket. An N6-acetyllysine; alternate modification is found at Lys-413. Residue Lys-413 is modified to N6-succinyllysine; alternate. Lys-452 and Lys-470 each carry N6-acetyllysine.

This sequence belongs to the class-III pyridoxal-phosphate-dependent aminotransferase family. As to quaternary structure, homodimer; disulfide-linked. Requires pyridoxal 5'-phosphate as cofactor. The cofactor is [2Fe-2S] cluster.

The protein resides in the mitochondrion matrix. The enzyme catalyses 4-aminobutanoate + 2-oxoglutarate = succinate semialdehyde + L-glutamate. The catalysed reaction is (S)-3-amino-2-methylpropanoate + 2-oxoglutarate = 2-methyl-3-oxopropanoate + L-glutamate. Catalyzes the conversion of gamma-aminobutyrate and L-beta-aminoisobutyrate to succinate semialdehyde and methylmalonate semialdehyde, respectively. Can also convert delta-aminovalerate and beta-alanine. In Sus scrofa (Pig), this protein is 4-aminobutyrate aminotransferase, mitochondrial (ABAT).